Reading from the N-terminus, the 300-residue chain is GTPase Era (300 aa).

Residues 5-176 (HSGFVCLVGR…IDVLAAALPA (172 aa)) form the Era-type G domain. Residues 13–20 (GRPNTGKS) are G1. GTP is bound at residue 13 to 20 (GRPNTGKS). The segment at 39-43 (QTTRH) is G2. The G3 stretch occupies residues 60-63 (DTPG). GTP-binding positions include 60-64 (DTPGL) and 125-128 (TKID). Positions 125 to 128 (TKID) are G4. The tract at residues 155 to 157 (VSA) is G5. A KH type-2 domain is found at 207–286 (VRDELPHSLA…YLDLRVKVAK (80 aa)).

The protein belongs to the TRAFAC class TrmE-Era-EngA-EngB-Septin-like GTPase superfamily. Era GTPase family. In terms of assembly, monomer.

The protein localises to the cell envelope. It localises to the secreted. It is found in the cell wall. Exhibits GTPase activity. Binds RNA but is probably not involved in ribosome assembly in mycobacteria. The sequence is that of GTPase Era from Mycobacterium bovis (strain ATCC BAA-935 / AF2122/97).